Reading from the N-terminus, the 278-residue chain is S-formylglutathione hydrolase YeiG (278 aa).

Residues Ser-145, Asp-223, and His-256 each act as charge relay system in the active site.

The protein belongs to the esterase D family.

It carries out the reaction S-formylglutathione + H2O = formate + glutathione + H(+). Serine hydrolase involved in the detoxification of formaldehyde. Hydrolyzes S-formylglutathione to glutathione and formate. This Shigella boydii serotype 4 (strain Sb227) protein is S-formylglutathione hydrolase YeiG (yeiG).